Here is a 704-residue protein sequence, read N- to C-terminus: Arylphorin (704 aa).

Positions 1–16 are cleaved as a signal peptide; that stretch reads MKIVLVLAGLIALVQS. N73, N212, and N360 each carry an N-linked (GlcNAc...) asparagine glycan.

The protein belongs to the hemocyanin family. Homohexamer of two stacked trimers; disulfide-linked. In terms of processing, glycosylation at Asn-360 is required for proper folding.

The protein localises to the secreted. It is found in the extracellular space. Functionally, arylphorin is a larval storage protein (LSP) which may serve as a storage protein used primarily as a source of aromatic amino acids for protein synthesis during metamorphosis. It is a constituent of the sclerotizing system of the cuticle, and serves as a carrier for ecdysteroid hormone. The protein is Arylphorin of Antheraea pernyi (Chinese oak silk moth).